Consider the following 186-residue polypeptide: Holliday junction branch migration complex subunit RuvA (186 aa).

Residues Met1–Lys61 are domain I. Residues Asp62 to Leu134 are domain II. The segment at Leu134–Gln137 is flexible linker. Residues Leu138–Lys186 form a domain III region.

Belongs to the RuvA family. In terms of assembly, homotetramer. Forms an RuvA(8)-RuvB(12)-Holliday junction (HJ) complex. HJ DNA is sandwiched between 2 RuvA tetramers; dsDNA enters through RuvA and exits via RuvB. An RuvB hexamer assembles on each DNA strand where it exits the tetramer. Each RuvB hexamer is contacted by two RuvA subunits (via domain III) on 2 adjacent RuvB subunits; this complex drives branch migration. In the full resolvosome a probable DNA-RuvA(4)-RuvB(12)-RuvC(2) complex forms which resolves the HJ.

It is found in the cytoplasm. Its function is as follows. The RuvA-RuvB-RuvC complex processes Holliday junction (HJ) DNA during genetic recombination and DNA repair, while the RuvA-RuvB complex plays an important role in the rescue of blocked DNA replication forks via replication fork reversal (RFR). RuvA specifically binds to HJ cruciform DNA, conferring on it an open structure. The RuvB hexamer acts as an ATP-dependent pump, pulling dsDNA into and through the RuvAB complex. HJ branch migration allows RuvC to scan DNA until it finds its consensus sequence, where it cleaves and resolves the cruciform DNA. This Acholeplasma laidlawii (strain PG-8A) protein is Holliday junction branch migration complex subunit RuvA.